The chain runs to 102 residues: Small ribosomal subunit protein uS10 (102 aa).

It belongs to the universal ribosomal protein uS10 family. Part of the 30S ribosomal subunit.

In terms of biological role, involved in the binding of tRNA to the ribosomes. In Leifsonia xyli subsp. xyli (strain CTCB07), this protein is Small ribosomal subunit protein uS10.